The chain runs to 93 residues: Small ribosomal subunit protein uS17 (93 aa).

This sequence belongs to the universal ribosomal protein uS17 family. As to quaternary structure, part of the 30S ribosomal subunit.

Its function is as follows. One of the primary rRNA binding proteins, it binds specifically to the 5'-end of 16S ribosomal RNA. This chain is Small ribosomal subunit protein uS17, found in Corynebacterium kroppenstedtii (strain DSM 44385 / JCM 11950 / CIP 105744 / CCUG 35717).